Here is a 232-residue protein sequence, read N- to C-terminus: Phosphoribosylaminoimidazole-succinocarboxamide synthase (232 aa).

It belongs to the SAICAR synthetase family.

The catalysed reaction is 5-amino-1-(5-phospho-D-ribosyl)imidazole-4-carboxylate + L-aspartate + ATP = (2S)-2-[5-amino-1-(5-phospho-beta-D-ribosyl)imidazole-4-carboxamido]succinate + ADP + phosphate + 2 H(+). It participates in purine metabolism; IMP biosynthesis via de novo pathway; 5-amino-1-(5-phospho-D-ribosyl)imidazole-4-carboxamide from 5-amino-1-(5-phospho-D-ribosyl)imidazole-4-carboxylate: step 1/2. This Finegoldia magna (strain ATCC 29328 / DSM 20472 / WAL 2508) (Peptostreptococcus magnus) protein is Phosphoribosylaminoimidazole-succinocarboxamide synthase.